A 338-amino-acid chain; its full sequence is Mycothiol acetyltransferase (338 aa).

2 consecutive N-acetyltransferase domains span residues 29–173 (PETY…HQLP) and 181–338 (ISLR…NKFQ). D55 contacts 1D-myo-inositol 2-(L-cysteinylamino)-2-deoxy-alpha-D-glucopyranoside. 105–107 (LVV) provides a ligand contact to acetyl-CoA. Positions 208, 248, and 261 each coordinate 1D-myo-inositol 2-(L-cysteinylamino)-2-deoxy-alpha-D-glucopyranoside. Acetyl-CoA is bound by residues 265–267 (VGI) and 272–278 (QGKGLGK). Y299 is a binding site for 1D-myo-inositol 2-(L-cysteinylamino)-2-deoxy-alpha-D-glucopyranoside.

Belongs to the acetyltransferase family. MshD subfamily. In terms of assembly, monomer.

The catalysed reaction is 1D-myo-inositol 2-(L-cysteinylamino)-2-deoxy-alpha-D-glucopyranoside + acetyl-CoA = mycothiol + CoA + H(+). In terms of biological role, catalyzes the transfer of acetyl from acetyl-CoA to desacetylmycothiol (Cys-GlcN-Ins) to form mycothiol. The polypeptide is Mycothiol acetyltransferase (Renibacterium salmoninarum (strain ATCC 33209 / DSM 20767 / JCM 11484 / NBRC 15589 / NCIMB 2235)).